We begin with the raw amino-acid sequence, 122 residues long: Large ribosomal subunit protein uL14c (122 aa).

The protein belongs to the universal ribosomal protein uL14 family. As to quaternary structure, part of the 50S ribosomal subunit.

It is found in the plastid. It localises to the chloroplast. Functionally, binds to 23S rRNA. This chain is Large ribosomal subunit protein uL14c, found in Zygnema circumcarinatum (Green alga).